A 379-amino-acid chain; its full sequence is Cytochrome b (379 aa).

The next 4 helical transmembrane spans lie at 33-53 (FGSLLGMCLVIQILTGLFLAM), 77-98 (WLIRYLHANGASMFFICLFIHV), 113-133 (WNIGIILLLTTMATAFVGYVL), and 178-198 (FFAFHFILPFIIAAFALVHLL). Positions 83 and 97 each coordinate heme b. The heme b site is built by H182 and H196. H201 serves as a coordination point for a ubiquinone. 4 helical membrane passes run 226 to 246 (IKDLLGIFLLLLVLMTLALFF), 288 to 308 (LGGVLALVLSILILAAFPLLN), 320 to 340 (VTQTIYWIFIANLLVLTWIGG), and 347 to 367 (FTTIGQIASITYFTIIIILIP).

It belongs to the cytochrome b family. The cytochrome bc1 complex contains 11 subunits: 3 respiratory subunits (MT-CYB, CYC1 and UQCRFS1), 2 core proteins (UQCRC1 and UQCRC2) and 6 low-molecular weight proteins (UQCRH/QCR6, UQCRB/QCR7, UQCRQ/QCR8, UQCR10/QCR9, UQCR11/QCR10 and a cleavage product of UQCRFS1). This cytochrome bc1 complex then forms a dimer. Requires heme b as cofactor.

Its subcellular location is the mitochondrion inner membrane. In terms of biological role, component of the ubiquinol-cytochrome c reductase complex (complex III or cytochrome b-c1 complex) that is part of the mitochondrial respiratory chain. The b-c1 complex mediates electron transfer from ubiquinol to cytochrome c. Contributes to the generation of a proton gradient across the mitochondrial membrane that is then used for ATP synthesis. In Akodon lindberghi (Lindbergh's grass mouse), this protein is Cytochrome b (MT-CYB).